A 682-amino-acid polypeptide reads, in one-letter code: Potassium-transporting ATPase ATP-binding subunit (682 aa).

A run of 4 helical transmembrane segments spans residues 34–54 (PVMF…IAMA), 62–82 (ALFS…ANFA), 219–239 (IALT…TATL), and 254–274 (VLVA…LSAI). The active-site 4-aspartylphosphate intermediate is Asp-307. ATP is bound by residues Asp-344, Glu-348, 377–384 (FTAQSRMS), and Lys-395. 2 residues coordinate Mg(2+): Asp-518 and Asp-522. The next 3 membrane-spanning stretches (helical) occupy residues 588–608 (FAII…LNIM), 616–636 (AILS…PLAL), and 656–676 (IYGL…DLLL).

This sequence belongs to the cation transport ATPase (P-type) (TC 3.A.3) family. Type IA subfamily. As to quaternary structure, the system is composed of three essential subunits: KdpA, KdpB and KdpC.

It is found in the cell inner membrane. The catalysed reaction is K(+)(out) + ATP + H2O = K(+)(in) + ADP + phosphate + H(+). Its function is as follows. Part of the high-affinity ATP-driven potassium transport (or Kdp) system, which catalyzes the hydrolysis of ATP coupled with the electrogenic transport of potassium into the cytoplasm. This subunit is responsible for energy coupling to the transport system and for the release of the potassium ions to the cytoplasm. This is Potassium-transporting ATPase ATP-binding subunit from Escherichia coli O9:H4 (strain HS).